We begin with the raw amino-acid sequence, 407 residues long: Na(+)-translocating NADH-quinone reductase subunit F (407 aa).

A helical transmembrane segment spans residues 6–26 (IFLAIGMFTAIVLGLVAIILV). The 2Fe-2S ferredoxin-type domain maps to 35–127 (GDVTIQINGE…DMQIRVPEEV (93 aa)). Residues Cys70, Cys76, Cys79, and Cys111 each contribute to the [2Fe-2S] cluster site. In terms of domain architecture, FAD-binding FR-type spans 130-269 (VKKWECTVES…YGPFGEFFAK (140 aa)).

Belongs to the NqrF family. In terms of assembly, composed of six subunits; NqrA, NqrB, NqrC, NqrD, NqrE and NqrF. It depends on [2Fe-2S] cluster as a cofactor. Requires FAD as cofactor.

The protein resides in the cell inner membrane. The enzyme catalyses a ubiquinone + n Na(+)(in) + NADH + H(+) = a ubiquinol + n Na(+)(out) + NAD(+). NQR complex catalyzes the reduction of ubiquinone-1 to ubiquinol by two successive reactions, coupled with the transport of Na(+) ions from the cytoplasm to the periplasm. The first step is catalyzed by NqrF, which accepts electrons from NADH and reduces ubiquinone-1 to ubisemiquinone by a one-electron transfer pathway. The protein is Na(+)-translocating NADH-quinone reductase subunit F of Pseudomonas aeruginosa (strain UCBPP-PA14).